The sequence spans 62 residues: Bacteriocin piscicolin-126 (62 aa).

The propeptide occupies 1–18 (MKTVKELSVKEMQLTTGG). A disulfide bridge links cysteine 27 with cysteine 32.

The protein localises to the secreted. Its function is as follows. Inhibits the growth of several Gram-positive bacteria, especially the food-borne pathogen L.monocytogenes, but has no effect on the growth of a number of yeasts and Gram-negative bacteria. In Carnobacterium maltaromaticum (Carnobacterium piscicola), this protein is Bacteriocin piscicolin-126 (pisA).